Consider the following 200-residue polypeptide: Glutathione peroxidase 1 (200 aa).

Ser-31 carries the post-translational modification Phosphoserine. Sec-46 is an active-site residue. Sec-46 is a non-standard amino acid (selenocysteine). Residues Lys-85 and Lys-111 each carry the N6-acetyllysine; alternate modification. Lys-85 and Lys-111 each carry N6-succinyllysine; alternate. N6-acetyllysine is present on Lys-118. Residue Lys-145 is modified to N6-acetyllysine; alternate. Lys-145 is subject to N6-succinyllysine; alternate. Ser-194 is modified (phosphoserine).

The protein belongs to the glutathione peroxidase family. Homotetramer. Interacts with MIEN1. Post-translationally, during periods of oxidative stress, Sec-46 may react with a superoxide radical, irreversibly lose hydroselenide and be converted to dehydroalanine.

It localises to the cytoplasm. The protein localises to the mitochondrion. The catalysed reaction is 2 glutathione + H2O2 = glutathione disulfide + 2 H2O. It carries out the reaction a hydroperoxy polyunsaturated fatty acid + 2 glutathione = a hydroxy polyunsaturated fatty acid + glutathione disulfide + H2O. The enzyme catalyses tert-butyl hydroperoxide + 2 glutathione = tert-butanol + glutathione disulfide + H2O. It catalyses the reaction cumene hydroperoxide + 2 glutathione = 2-phenylpropan-2-ol + glutathione disulfide + H2O. The catalysed reaction is (13S)-hydroperoxy-(9Z,11E)-octadecadienoate + 2 glutathione = (13S)-hydroxy-(9Z,11E)-octadecadienoate + glutathione disulfide + H2O. It carries out the reaction (9S)-hydroperoxy-(10E,12Z)-octadecadienoate + 2 glutathione = (9S)-hydroxy-(10E,12Z)-octadecadienoate + glutathione disulfide + H2O. The enzyme catalyses (5S)-hydroperoxy-(6E,8Z,11Z,14Z)-eicosatetraenoate + 2 glutathione = (5S)-hydroxy-(6E,8Z,11Z,14Z)-eicosatetraenoate + glutathione disulfide + H2O. It catalyses the reaction (12S)-hydroperoxy-(5Z,8Z,10E,14Z)-eicosatetraenoate + 2 glutathione = (12S)-hydroxy-(5Z,8Z,10E,14Z)-eicosatetraenoate + glutathione disulfide + H2O. The catalysed reaction is (12R)-hydroperoxy-(5Z,8Z,10E,14Z)-eicosatetraenoate + 2 glutathione = (12R)-hydroxy-(5Z,8Z,10E,14Z)-eicosatetraenoate + glutathione disulfide + H2O. It carries out the reaction (15S)-hydroperoxy-(5Z,8Z,11Z,13E)-eicosatetraenoate + 2 glutathione = (15S)-hydroxy-(5Z,8Z,11Z,13E)-eicosatetraenoate + glutathione disulfide + H2O. The enzyme catalyses (5S)-hydroperoxy-(6E,8Z,11Z,14Z,17Z)-eicosapentaenoate + 2 glutathione = (5S)-hydroxy-(6E,8Z,11Z,14Z,17Z)-eicosapentaenoate + glutathione disulfide + H2O. It catalyses the reaction (12S)-hydroperoxy-(5Z,8Z,10E,14Z,17Z)-eicosapentaenoate + 2 glutathione = (12S)-hydroxy-(5Z,8Z,10E,14Z,17Z)-eicosapentaenoate + glutathione disulfide + H2O. The catalysed reaction is (15S)-hydroperoxy-(5Z,8Z,11Z,13E,17Z)-eicosapentaenoate + 2 glutathione = (15S)-hydroxy-(5Z,8Z,11Z,13E,17Z)-eicosapentaenoate + glutathione disulfide + H2O. It carries out the reaction (15S)-hydroperoxy-(11Z,13E)-eicosadienoate + 2 glutathione = (15S)-hydroxy-(11Z,13E)-eicosadienoate + glutathione disulfide + H2O. The enzyme catalyses (17S)-hydroperoxy-(4Z,7Z,10Z,13Z,15E,19Z)-docosahexaenoate + 2 glutathione = (17S)-hydroxy-(4Z,7Z,10Z,13Z,15E,19Z)-docosahexaenoate + glutathione disulfide + H2O. Functionally, catalyzes the reduction of hydroperoxides in a glutathione-dependent manner thus regulating cellular redox homeostasis. Can reduce small soluble hydroperoxides such as H2O2, cumene hydroperoxide and tert-butyl hydroperoxide, as well as several fatty acid-derived hydroperoxides. In platelets catalyzes the reduction of 12-hydroperoxyeicosatetraenoic acid, the primary product of the arachidonate 12-lipoxygenase pathway. The polypeptide is Glutathione peroxidase 1 (GPX1) (Oryctolagus cuniculus (Rabbit)).